The chain runs to 84 residues: Gomesin-like peptide (84 aa).

The N-terminal stretch at 1 to 23 (MNRTRALVCLFLAVLILAHESEA) is a signal peptide. A Pyrrolidone carboxylic acid modification is found at glutamine 24. 2 disulfides stabilise this stretch: cysteine 25/cysteine 38 and cysteine 29/cysteine 34. Arginine 41 carries the post-translational modification Arginine amide. A propeptide spanning residues 42 to 84 (GKRSVEEPSGGAQVVEKRAVDDADIPSAVEERELDEEESIEFR) is cleaved from the precursor.

Expressed by the venom gland.

Its subcellular location is the secreted. In terms of biological role, antibacterial peptide. This chain is Gomesin-like peptide, found in Hadronyche infensa (Fraser island funnel-web spider).